A 706-amino-acid polypeptide reads, in one-letter code: Phenylalanine--tRNA ligase beta subunit, chloroplastic (706 aa).

Residues 300 to 388 (KVLKPIVLNY…RLHGFNNFLT (89 aa)) form the B5 domain. Residues Asp366, Asp372, Glu375, and Glu376 each coordinate Mg(2+). The FDX-ACB domain maps to 612–705 (SVYPKIVKDL…LELKVQAILR (94 aa)).

Belongs to the phenylalanyl-tRNA synthetase beta subunit family. Type 1 subfamily. As to quaternary structure, tetramer of two alpha and two beta subunits. Mg(2+) serves as cofactor.

The protein resides in the plastid. It is found in the chloroplast. The catalysed reaction is tRNA(Phe) + L-phenylalanine + ATP = L-phenylalanyl-tRNA(Phe) + AMP + diphosphate + H(+). This Phaeodactylum tricornutum (strain CCAP 1055/1) protein is Phenylalanine--tRNA ligase beta subunit, chloroplastic.